The primary structure comprises 434 residues: Histidinol dehydrogenase (434 aa).

Tyr-130, Gln-188, and Asn-211 together coordinate NAD(+). Ser-237, Gln-259, and His-262 together coordinate substrate. The Zn(2+) site is built by Gln-259 and His-262. Active-site proton acceptor residues include Glu-326 and His-327. Substrate-binding residues include His-327, Asp-360, Glu-414, and His-419. Asp-360 serves as a coordination point for Zn(2+). His-419 is a Zn(2+) binding site.

Belongs to the histidinol dehydrogenase family. Homodimer. Requires Zn(2+) as cofactor. It depends on Mn(2+) as a cofactor.

The catalysed reaction is L-histidinol + 2 NAD(+) + H2O = L-histidine + 2 NADH + 3 H(+). The protein operates within amino-acid biosynthesis; L-histidine biosynthesis; L-histidine from 5-phospho-alpha-D-ribose 1-diphosphate: step 9/9. Activity is lost when the metal is removed through urea denaturation or chelation, and can be regained by addition of metal. Functionally, catalyzes the sequential NAD-dependent oxidations of L-histidinol to L-histidinaldehyde and then to L-histidine. The sequence is that of Histidinol dehydrogenase (hisD) from Salmonella typhimurium (strain LT2 / SGSC1412 / ATCC 700720).